A 1041-amino-acid polypeptide reads, in one-letter code: Sarcoplasmic/endoplasmic reticulum calcium ATPase 2 (1041 aa).

Over 1 to 48 the chain is Cytoplasmic; the sequence is MENAHTKTVEEVLAYFGVNESTGLSLEQVKKLKEKWGSNELPAEEGKT. Residues 49–69 form a helical membrane-spanning segment; sequence LLELVIEQFEDLLVRILLLAA. Over 70 to 89 the chain is Lumenal; it reads CISFVLAWFEEGEETITAFV. The helical transmembrane segment at 90–110 threads the bilayer; that stretch reads EPFVILLILVANAIVGVWQER. The Cytoplasmic segment spans residues 111–253; the sequence is NAENAIEALK…QERTPLQQKL (143 aa). A helical membrane pass occupies residues 254 to 273; it reads DEFGEQLSKVISLICIAVWI. Topologically, residues 274–295 are lumenal; that stretch reads INIGHFNDPVHGGSWIRGAIYY. Residues 296 to 313 form a helical membrane-spanning segment; the sequence is FKIAVALAVAAIPEGLPA. Positions 304, 305, 307, and 309 each coordinate Ca(2+). Over 314–756 the chain is Cytoplasmic; that stretch reads VITTCLALGT…EEGRAIYNNM (443 aa). Aspartate 351 (4-aspartylphosphate intermediate) is an active-site residue. Mg(2+) is bound by residues aspartate 351 and threonine 353. Residues threonine 353, glutamate 442, arginine 489, lysine 514, arginine 559, threonine 624, glycine 625, aspartate 626, arginine 677, and lysine 683 each contribute to the ATP site. Mg(2+) is bound at residue aspartate 702. Position 705 (asparagine 705) interacts with ATP. Residues 757–776 form a helical membrane-spanning segment; it reads KQFIRYLISSNVGEVVCIFL. 2 residues coordinate Ca(2+): asparagine 767 and glutamate 770. Residues 777-786 lie on the Lumenal side of the membrane; it reads TAALGFPEAL. Residues 787–807 traverse the membrane as a helical segment; the sequence is IPVQLLWVNLVTDGLPATALG. The tract at residues 787-807 is interaction with PLN; the sequence is IPVQLLWVNLVTDGLPATALG. Residues asparagine 795, threonine 798, and aspartate 799 each coordinate Ca(2+). Residues 808-827 are Cytoplasmic-facing; it reads FNPPDLDIMNKPPRNPKEPL. The helical transmembrane segment at 828 to 850 threads the bilayer; that stretch reads ISGWLFFRYLAIGCYVGAATVGA. The Lumenal portion of the chain corresponds to 851-896; it reads AAWWFIAADGGPRVTFYQLSHFLQCKEDNPDFSGVDCVVFESPYPM. Cysteines 875 and 887 form a disulfide. The helical transmembrane segment at 897–916 threads the bilayer; sequence TMALSVLVTIEMCNALNSLS. Position 907 (glutamate 907) interacts with Ca(2+). Residues 917–929 are Cytoplasmic-facing; that stretch reads ENQSLMRMPPWEN. A helical transmembrane segment spans residues 930–948; sequence IWLVGAICLSMSLHFLILY. An interaction with PLN region spans residues 931–942; sequence WLVGAICLSMSL. Over 949 to 963 the chain is Lumenal; it reads VEPLPIIFQITPLNV. The helical transmembrane segment at 964–984 threads the bilayer; it reads TQWLMVLKISLPVILLDETLK. At 985–1041 the chain is on the cytoplasmic side; the sequence is YVARNYLEPGKDSVQPATKPCSLSACTEGVSWPFVFITLPLVIWLYSTDTNFSDMFW.

It belongs to the cation transport ATPase (P-type) (TC 3.A.3) family. Type IIA subfamily. Interacts with sarcolipin (SLN). Interacts with phospholamban (PLN). Interacts with myoregulin (MRLN). Interacts with DWORF. Interacts with TMX2. The cofactor is Mg(2+). Only isoform 2 is detected in heart, while both isoforms are expressed in brain, with isoform 2 being predominant.

It is found in the endoplasmic reticulum membrane. The protein resides in the sarcoplasmic reticulum membrane. It carries out the reaction Ca(2+)(in) + ATP + H2O = Ca(2+)(out) + ADP + phosphate + H(+). Its activity is regulated as follows. Reversibly inhibited by phospholamban (PLN) at low calcium concentrations. Inhibited by sarcolipin (SLN) and myoregulin (MRLN). Enhanced by DWORF; DWORF increases activity by displacing sarcolipin (SLN), phospholamban (PLN) and myoregulin (MRLN). Its function is as follows. This magnesium-dependent enzyme catalyzes the hydrolysis of ATP coupled with the translocation of calcium from the cytosol to the sarcoplasmic reticulum lumen. Isoform SERCA2A is involved in the regulation of the contraction/relaxation cycle. May act as a regulator of TNFSF11-mediated Ca(2+) signaling during osteoclastogenesis. The chain is Sarcoplasmic/endoplasmic reticulum calcium ATPase 2 (ATP2A2) from Gallus gallus (Chicken).